The primary structure comprises 146 residues: Basic phospholipase A2 (146 aa).

The N-terminal stretch at 1–21 (MNPAHLLVLAAVCVSLLGASS) is a signal peptide. Residues 22–27 (VPPRPL) constitute a propeptide that is removed on maturation. Disulfide bonds link Cys-38-Cys-97, Cys-52-Cys-145, Cys-54-Cys-70, Cys-69-Cys-127, Cys-76-Cys-120, Cys-86-Cys-113, and Cys-106-Cys-118. 3 residues coordinate Ca(2+): Tyr-53, Gly-55, and Gly-57. Residue His-73 is part of the active site. Asp-74 is a binding site for Ca(2+). A glycan (N-linked (GlcNAc...) asparagine) is linked at Asn-109. Asp-121 is a catalytic residue.

Belongs to the phospholipase A2 family. Group I subfamily. D49 sub-subfamily. The cofactor is Ca(2+). In terms of tissue distribution, expressed by the venom gland.

It is found in the secreted. It catalyses the reaction a 1,2-diacyl-sn-glycero-3-phosphocholine + H2O = a 1-acyl-sn-glycero-3-phosphocholine + a fatty acid + H(+). In terms of biological role, PLA2 catalyzes the calcium-dependent hydrolysis of the 2-acyl groups in 3-sn-phosphoglycerides. The sequence is that of Basic phospholipase A2 from Micrurus corallinus (Brazilian coral snake).